The following is a 391-amino-acid chain: Histone acetyltransferase type B catalytic subunit (391 aa).

The segment at 193–195 (YKH) is interaction with histone H4 N-terminus. Acetyl-CoA contacts are provided by residues 219 to 221 (FII) and 226 to 232 (QSKSHGS). The Proton donor/acceptor role is filled by Glu-254. A disordered region spans residues 372–391 (RRVLPSDEENAGESKRHKKE).

It belongs to the HAT1 family. Component of the HAT-B complex composed of at least HAT1 and HAT2. The HAT-B complex binds to histone H4 tail.

The protein localises to the cytoplasm. It is found in the nucleus. It carries out the reaction L-lysyl-[protein] + acetyl-CoA = N(6)-acetyl-L-lysyl-[protein] + CoA + H(+). In terms of biological role, catalytic component of the histone acetylase B (HAT-B) complex. Acetylates 'Lys-12' of histone H4 which is required for telomeric silencing. Has intrinsic substrate specificity that modifies lysine in recognition sequence GXGKXG. Involved in DNA double-strand break repair. This is Histone acetyltransferase type B catalytic subunit (HAT1) from Eremothecium gossypii (strain ATCC 10895 / CBS 109.51 / FGSC 9923 / NRRL Y-1056) (Yeast).